The following is an 86-amino-acid chain: Neurotoxin LmNaTx34.1 (86 aa).

Positions 1-18 (MKTVILVVIALMVIEVQG) are cleaved as a signal peptide. The LCN-type CS-alpha/beta domain maps to 19-85 (DGYLMVRAGI…IWTYEKNTCS (67 aa)). Intrachain disulfides connect Cys32–Cys84, Cys36–Cys57, Cys43–Cys64, and Cys47–Cys66.

Belongs to the long (4 C-C) scorpion toxin superfamily. Sodium channel inhibitor family. Beta subfamily. Expressed by the venom gland.

The protein resides in the secreted. Functionally, binds voltage-independently at site-4 of sodium channels (Nav) and shift the voltage of activation toward more negative potentials thereby affecting sodium channel activation and promoting spontaneous and repetitive firing. This is Neurotoxin LmNaTx34.1 from Lychas mucronatus (Chinese swimming scorpion).